The following is a 260-amino-acid chain: MVLVRVLANLLMLQLSYAQKSSELIIGGDECNINEHRFLVALYTFRSRRFHCSGTLINEEWVLSAARCDRKNIRIQLGMHSTNVINEDVQTRVPKEKFSCLSSKTYTKWNKDIMLIRLKKPVNNSTHIAPVSLPSNPPTLGSVCRVMGWGTISATKETHPDVPLCANINILDYSVCRAAYARLPATSRTLCAGILEGGIDTCKGDPGGPLICNGQFQGIVSWGSDPCAKPHEPGSYTKVFDHLNWIQSIIAGNTTATCPP.

Positions 1-18 (MVLVRVLANLLMLQLSYA) are cleaved as a signal peptide. The propeptide occupies 19–24 (QKSSEL). The 227-residue stretch at 25 to 251 (IIGGDECNIN…HLNWIQSIIA (227 aa)) folds into the Peptidase S1 domain. 6 disulfide bridges follow: C31-C165, C52-C68, C100-C258, C144-C212, C176-C191, and C202-C227. 2 N-linked (GlcNAc...) asparagine glycosylation sites follow: N123 and N124. A glycan (N-linked (GlcNAc...) asparagine) is linked at N253.

This sequence belongs to the peptidase S1 family. Snake venom subfamily. In terms of tissue distribution, expressed by the venom gland.

Its subcellular location is the secreted. In terms of biological role, snake venom serine protease homolog that may act in the hemostasis system of the prey. In Protobothrops jerdonii (Jerdon's pitviper), this protein is Snake venom serine protease homolog.